The primary structure comprises 214 residues: MNNLKRFTKSIFSCIALSGLLFLGGCETLPPMTDLSPITVDNAAQAKAWELQGKLAIRTPEDKLSANLYWRHSEERDELTLTTMLGTTVLTLEATPNSAHLHIDGKDFRDTNAQALLERVSGWSIPINDLPLWITGQIGSLDRVIAVDSAGQAKQLQNMQTPPPWLVTFLSWQSQSGAKVPYQLTLERGDLQLKLQLNQWQALGKPSILLGEKP.

The N-terminal stretch at 1 to 25 (MNNLKRFTKSIFSCIALSGLLFLGG) is a signal peptide. Cysteine 26 carries N-palmitoyl cysteine lipidation. A lipid anchor (S-diacylglycerol cysteine) is attached at cysteine 26.

It belongs to the LolB family. As to quaternary structure, monomer.

It localises to the cell outer membrane. Plays a critical role in the incorporation of lipoproteins in the outer membrane after they are released by the LolA protein. The polypeptide is Outer-membrane lipoprotein LolB (Shewanella oneidensis (strain ATCC 700550 / JCM 31522 / CIP 106686 / LMG 19005 / NCIMB 14063 / MR-1)).